The primary structure comprises 350 residues: Methionine aminopeptidase 1D, chloroplastic/mitochondrial (350 aa).

The N-terminal 49 residues, 1 to 49 (MAGVKSLQPRLISSFLGNNSIRSTQPLIHLFRFDLGRRHVSMQLSRTFS), are a transit peptide targeting the chloroplast and mitochondrion. An N-acetylglycine modification is found at Gly-50. The tract at residues 71-90 (RLRPGNVSPRRPVPGHITKP) is disordered. His-180 contributes to the substrate binding site. Residues Asp-197, Asp-208, and His-271 each coordinate a divalent metal cation. Position 278 (His-278) interacts with substrate. 2 residues coordinate a divalent metal cation: Glu-303 and Glu-334.

The protein belongs to the peptidase M24A family. Methionine aminopeptidase type 1 subfamily. The cofactor is Co(2+). Zn(2+) serves as cofactor. Mn(2+) is required as a cofactor. Requires Fe(2+) as cofactor. In terms of tissue distribution, ubiquitous. Preferentially expressed in green tissues.

It is found in the plastid. The protein localises to the chloroplast. Its subcellular location is the mitochondrion. The enzyme catalyses Release of N-terminal amino acids, preferentially methionine, from peptides and arylamides.. In terms of biological role, removes the N-terminal methionine from nascent proteins. The N-terminal methionine is often cleaved when the second residue in the primary sequence is small and uncharged (Met-Ala-, Cys, Gly, Pro, Ser, Thr, or Val). The polypeptide is Methionine aminopeptidase 1D, chloroplastic/mitochondrial (MAP1D) (Arabidopsis thaliana (Mouse-ear cress)).